We begin with the raw amino-acid sequence, 1050 residues long: Valine--tRNA ligase (1050 aa).

Residues 37 to 57 (EKKAAASDKPVKEAKAKKEQT) are compositionally biased toward basic and acidic residues. The tract at residues 37-72 (EKKAAASDKPVKEAKAKKEQTVEAAEPVDQTPTGQR) is disordered. The 'HIGH' region signature appears at 127-137 (PNVTGNLHVGH). The 'KMSKS' region motif lies at 642-646 (KMSKS). Lys645 serves as a coordination point for ATP.

The protein belongs to the class-I aminoacyl-tRNA synthetase family.

The catalysed reaction is tRNA(Val) + L-valine + ATP = L-valyl-tRNA(Val) + AMP + diphosphate. This chain is Valine--tRNA ligase, found in Caenorhabditis elegans.